We begin with the raw amino-acid sequence, 140 residues long: Small ribosomal subunit protein uS12 (140 aa).

D102 is subject to 3-methylthioaspartic acid.

The protein belongs to the universal ribosomal protein uS12 family. Part of the 30S ribosomal subunit. Contacts proteins S8 and S17. May interact with IF1 in the 30S initiation complex.

With S4 and S5 plays an important role in translational accuracy. Its function is as follows. Interacts with and stabilizes bases of the 16S rRNA that are involved in tRNA selection in the A site and with the mRNA backbone. Located at the interface of the 30S and 50S subunits, it traverses the body of the 30S subunit contacting proteins on the other side and probably holding the rRNA structure together. The combined cluster of proteins S8, S12 and S17 appears to hold together the shoulder and platform of the 30S subunit. This chain is Small ribosomal subunit protein uS12, found in Bacillus cytotoxicus (strain DSM 22905 / CIP 110041 / 391-98 / NVH 391-98).